The following is a 1368-amino-acid chain: DNA-directed RNA polymerase subunit beta (1368 aa).

Belongs to the RNA polymerase beta chain family. In terms of assembly, the RNAP catalytic core consists of 2 alpha, 1 beta, 1 beta' and 1 omega subunit. When a sigma factor is associated with the core the holoenzyme is formed, which can initiate transcription.

The enzyme catalyses RNA(n) + a ribonucleoside 5'-triphosphate = RNA(n+1) + diphosphate. Functionally, DNA-dependent RNA polymerase catalyzes the transcription of DNA into RNA using the four ribonucleoside triphosphates as substrates. The polypeptide is DNA-directed RNA polymerase subunit beta (Paraburkholderia phymatum (strain DSM 17167 / CIP 108236 / LMG 21445 / STM815) (Burkholderia phymatum)).